We begin with the raw amino-acid sequence, 737 residues long: Propionyl-CoA carboxylase alpha chain, mitochondrial (737 aa).

The transit peptide at 1-61 (MAGLWVRTVA…QCLVVSRSLS (61 aa)) directs the protein to the mitochondrion. A Biotin carboxylation domain is found at 71 to 518 (TFDKILIANR…STKFLSDVYP (448 aa)). N6-acetyllysine; alternate is present on lysine 74. Lysine 74 carries the N6-succinyllysine; alternate modification. Position 128 is an N6-succinyllysine (lysine 128). Position 159 is an N6-acetyllysine; alternate (lysine 159). Lysine 159 bears the N6-succinyllysine; alternate mark. Lysine 163 is modified (N6-acetyllysine). Lysine 186 serves as a coordination point for ATP. The ATP-grasp domain maps to 190–387 (KLLAKRAKVN…LVQEMILVAK (198 aa)). Lysine 197 is modified (N6-succinyllysine). The residue at position 209 (lysine 209) is an N6-acetyllysine; alternate. Position 209 is an N6-succinyllysine; alternate (lysine 209). Residues 218 to 279 (AREI…PRHI), glutamate 270, and asparagine 305 each bind ATP. The residue at position 261 (serine 261) is a Phosphoserine. An N6-succinyllysine modification is found at lysine 271. Position 337 is an N6-acetyllysine; alternate (lysine 337). Lysine 337 is subject to N6-succinyllysine; alternate. Mg(2+) contacts are provided by glutamate 345, glutamate 358, and asparagine 360. Glutamate 345, glutamate 358, and asparagine 360 together coordinate Mn(2+). Residue arginine 362 is part of the active site. An N6-succinyllysine mark is found at lysine 394 and lysine 416. Residue phenylalanine 418 participates in biotin binding. Position 505 is an N6-acetyllysine (lysine 505). Lysine 511, lysine 522, lysine 567, and lysine 657 each carry N6-succinyllysine. In terms of domain architecture, Biotinyl-binding spans 658–737 (FMLEKVPKDT…GEGDLLVELE (80 aa)). An N6-biotinyllysine; by HLCS modification is found at lysine 703.

In terms of assembly, the holoenzyme is a dodecamer composed of 6 PCCA/alpha subunits and 6 PCCB/beta subunits. Interacts (via the biotin carboxylation domain) with SIRT4. Interacts with SIRT3 and SIRT5. Requires biotin as cofactor. The cofactor is Mg(2+). Mn(2+) serves as cofactor. In terms of processing, acetylated. Post-translationally, the biotin cofactor is covalently attached to the C-terminal biotinyl-binding domain and is required for the catalytic activity. Biotinylation is catalyzed by HLCS.

The protein resides in the mitochondrion matrix. The catalysed reaction is propanoyl-CoA + hydrogencarbonate + ATP = (S)-methylmalonyl-CoA + ADP + phosphate + H(+). It carries out the reaction butanoyl-CoA + hydrogencarbonate + ATP = (2S)-ethylmalonyl-CoA + ADP + phosphate + H(+). It participates in metabolic intermediate metabolism; propanoyl-CoA degradation; succinyl-CoA from propanoyl-CoA: step 1/3. Functionally, this is one of the 2 subunits of the biotin-dependent propionyl-CoA carboxylase (PCC), a mitochondrial enzyme involved in the catabolism of odd chain fatty acids, branched-chain amino acids isoleucine, threonine, methionine, and valine and other metabolites. Propionyl-CoA carboxylase catalyzes the carboxylation of propionyl-CoA/propanoyl-CoA to D-methylmalonyl-CoA/(S)-methylmalonyl-CoA. Within the holoenzyme, the alpha subunit catalyzes the ATP-dependent carboxylation of the biotin carried by the biotin carboxyl carrier (BCC) domain, while the beta subunit then transfers the carboxyl group from carboxylated biotin to propionyl-CoA. Propionyl-CoA carboxylase also significantly acts on butyryl-CoA/butanoyl-CoA, which is converted to ethylmalonyl-CoA/(2S)-ethylmalonyl-CoA. Other alternative minor substrates include (2E)-butenoyl-CoA/crotonoyl-CoA. The chain is Propionyl-CoA carboxylase alpha chain, mitochondrial from Rattus norvegicus (Rat).